The chain runs to 366 residues: tRNA(Met) cytidine acetate ligase (366 aa).

Residues 7-20 (VAEF…HKYL), glycine 96, asparagine 152, and arginine 175 each bind ATP.

The protein belongs to the TmcAL family.

It is found in the cytoplasm. It catalyses the reaction cytidine(34) in elongator tRNA(Met) + acetate + ATP = N(4)-acetylcytidine(34) in elongator tRNA(Met) + AMP + diphosphate. Catalyzes the formation of N(4)-acetylcytidine (ac(4)C) at the wobble position of elongator tRNA(Met), using acetate and ATP as substrates. First activates an acetate ion to form acetyladenylate (Ac-AMP) and then transfers the acetyl group to tRNA to form ac(4)C34. This chain is tRNA(Met) cytidine acetate ligase, found in Streptococcus uberis (strain ATCC BAA-854 / 0140J).